Consider the following 169-residue polypeptide: Anaerobic nitrite reductase NSHB3 (169 aa).

Residues 15–165 enclose the Globin domain; sequence RFTEEQEALV…LVAAIKQGMK (151 aa). Residues 48 to 52 carry the Homodimerization motif; it reads EVAPS. Heme b-binding residues include Ser58, Lys72, His76, Arg106, Thr110, and His111. Residues 118 to 130 carry the Homodimerization motif; that stretch reads DAHFEVAKFALLE.

It belongs to the plant globin family. Homodimer. Heme b serves as cofactor.

The protein localises to the cytoplasm. The protein resides in the nucleus. The catalysed reaction is Fe(III)-heme b-[protein] + nitric oxide + H2O = Fe(II)-heme b-[protein] + nitrite + 2 H(+). Functionally, phytoglobin that reduces nitrite to nitric oxide under anoxic conditions (e.g. during flooding or in waterlogged soil). May not function as an oxygen storage or transport protein. Has an unusually high affinity for O(2) through an hexacoordinate heme iron because of a very low dissociation constant. This is Anaerobic nitrite reductase NSHB3 from Oryza sativa subsp. indica (Rice).